Consider the following 387-residue polypeptide: MSEQYTTPERENPDDERAFDRVFDALSISCPCDNPSNIPNRLFASPPTQSAPEQIDNGAADVQPFDFQAYNQPRLARTEGMLKLEIPNFSNLRSKVSTPFQYIGNLPWRLAAKTEKTKRTSDVKFFSVYIDCNPESESTLWSCDAVVEFRLVSRNRTIPPFSRQFTNKFNYNSNNWGFPSFMAWEDVNNSNYVRNEMVTVTARVVVQKVLGVRNVPKYDFGAMQTNICDMTLVINKQKLFVNKAYLALYSPVFYAMFFSNFQEREKTQVELEDVVLEEFRELLHVIYPCHKPITSDNVEYLLELGDKYEIQYVMDECERFLVGSEDILQITKLMWADQYLLAKLQDSCLRNIKEVSDVKAIKLTEEFKNLSDATKAALLEKVLKIVN.

The MATH domain maps to 79–204; that stretch reads EGMLKLEIPN…NEMVTVTARV (126 aa). A BTB domain is found at 228 to 295; sequence CDMTLVINKQ…IYPCHKPITS (68 aa).

This is BTB and MATH domain-containing protein 38 (bath-38) from Caenorhabditis elegans.